A 122-amino-acid chain; its full sequence is Large ribosomal subunit protein bL12 (122 aa).

This sequence belongs to the bacterial ribosomal protein bL12 family. In terms of assembly, homodimer. Part of the ribosomal stalk of the 50S ribosomal subunit. Forms a multimeric L10(L12)X complex, where L10 forms an elongated spine to which 2 to 4 L12 dimers bind in a sequential fashion. Binds GTP-bound translation factors.

In terms of biological role, forms part of the ribosomal stalk which helps the ribosome interact with GTP-bound translation factors. Is thus essential for accurate translation. This is Large ribosomal subunit protein bL12 from Lacticaseibacillus casei (strain BL23) (Lactobacillus casei).